The following is a 183-amino-acid chain: Probable actin-related protein 2/3 complex subunit 3 (183 aa).

It belongs to the ARPC3 family. In terms of assembly, component of the Arp2/3 complex.

It is found in the cytoplasm. The protein resides in the cytoskeleton. Its function is as follows. Functions as a component of the Arp2/3 complex which is involved in regulation of actin polymerization and together with an activating nucleation-promoting factor (NPF) mediates the formation of branched actin networks. The protein is Probable actin-related protein 2/3 complex subunit 3 (arx-5) of Caenorhabditis elegans.